The following is a 122-amino-acid chain: Large ribosomal subunit protein uL14 (122 aa).

It belongs to the universal ribosomal protein uL14 family. Part of the 50S ribosomal subunit. Forms a cluster with proteins L3 and L19. In the 70S ribosome, L14 and L19 interact and together make contacts with the 16S rRNA in bridges B5 and B8.

In terms of biological role, binds to 23S rRNA. Forms part of two intersubunit bridges in the 70S ribosome. The protein is Large ribosomal subunit protein uL14 of Afipia carboxidovorans (strain ATCC 49405 / DSM 1227 / KCTC 32145 / OM5) (Oligotropha carboxidovorans).